A 192-amino-acid chain; its full sequence is 3-hydroxyanthranilate 3,4-dioxygenase (192 aa).

Arg-50 provides a ligand contact to O2. Residues His-54, Glu-60, and His-102 each coordinate Fe cation. Residue Glu-60 coordinates substrate. Residues Arg-106 and Glu-116 each contribute to the substrate site. A divalent metal cation-binding residues include Cys-131, Cys-134, Cys-168, and Cys-171.

Belongs to the 3-HAO family. Requires Fe(2+) as cofactor.

The protein localises to the cytoplasm. It carries out the reaction 3-hydroxyanthranilate + O2 = (2Z,4Z)-2-amino-3-carboxymuconate 6-semialdehyde. The protein operates within cofactor biosynthesis; NAD(+) biosynthesis; quinolinate from L-kynurenine: step 3/3. Its function is as follows. Catalyzes the oxidative ring opening of 3-hydroxyanthranilate to 2-amino-3-carboxymuconate semialdehyde, which spontaneously cyclizes to quinolinate. This Neosartorya fischeri (strain ATCC 1020 / DSM 3700 / CBS 544.65 / FGSC A1164 / JCM 1740 / NRRL 181 / WB 181) (Aspergillus fischerianus) protein is 3-hydroxyanthranilate 3,4-dioxygenase (bna1).